Consider the following 220-residue polypeptide: Imidazoleglycerol-phosphate dehydratase (220 aa).

The protein belongs to the imidazoleglycerol-phosphate dehydratase family.

The catalysed reaction is D-erythro-1-(imidazol-4-yl)glycerol 3-phosphate = 3-(imidazol-4-yl)-2-oxopropyl phosphate + H2O. It functions in the pathway amino-acid biosynthesis; L-histidine biosynthesis; L-histidine from 5-phospho-alpha-D-ribose 1-diphosphate: step 6/9. This chain is Imidazoleglycerol-phosphate dehydratase (HIS3), found in Eremothecium gossypii (strain ATCC 10895 / CBS 109.51 / FGSC 9923 / NRRL Y-1056) (Yeast).